The chain runs to 138 residues: ATP synthase epsilon chain (138 aa).

This sequence belongs to the ATPase epsilon chain family. As to quaternary structure, F-type ATPases have 2 components, CF(1) - the catalytic core - and CF(0) - the membrane proton channel. CF(1) has five subunits: alpha(3), beta(3), gamma(1), delta(1), epsilon(1). CF(0) has three main subunits: a, b and c.

It is found in the cell inner membrane. Produces ATP from ADP in the presence of a proton gradient across the membrane. The sequence is that of ATP synthase epsilon chain from Idiomarina loihiensis (strain ATCC BAA-735 / DSM 15497 / L2-TR).